A 340-amino-acid polypeptide reads, in one-letter code: UDP-3-O-(3-hydroxymyristoyl)glucosamine N-acyltransferase (340 aa).

His-239 serves as the catalytic Proton acceptor.

This sequence belongs to the transferase hexapeptide repeat family. LpxD subfamily. In terms of assembly, homotrimer.

It catalyses the reaction a UDP-3-O-[(3R)-3-hydroxyacyl]-alpha-D-glucosamine + a (3R)-hydroxyacyl-[ACP] = a UDP-2-N,3-O-bis[(3R)-3-hydroxyacyl]-alpha-D-glucosamine + holo-[ACP] + H(+). The catalysed reaction is UDP-3-O-[(3R)-3-hydroxytetradecanoyl]-alpha-D-glucosamine + (3R)-hydroxytetradecanoyl-[ACP] = UDP-2-N,3-O-bis[(3R)-3-hydroxytetradecanoyl]-alpha-D-glucosamine + holo-[ACP] + H(+). It functions in the pathway glycolipid biosynthesis; lipid IV(A) biosynthesis; lipid IV(A) from (3R)-3-hydroxytetradecanoyl-[acyl-carrier-protein] and UDP-N-acetyl-alpha-D-glucosamine: step 3/6. Catalyzes the N-acylation of UDP-3-O-(hydroxytetradecanoyl)glucosamine using 3-hydroxytetradecanoyl-ACP as the acyl donor. Is involved in the biosynthesis of lipid A, a phosphorylated glycolipid that anchors the lipopolysaccharide to the outer membrane of the cell. The polypeptide is UDP-3-O-(3-hydroxymyristoyl)glucosamine N-acyltransferase (Sodalis glossinidius (strain morsitans)).